A 1014-amino-acid chain; its full sequence is Poly [ADP-ribose] polymerase 1 (1014 aa).

Alanine 2 is subject to N-acetylalanine. The PARP-type 1 zinc finger occupies 9 to 93 (YRVEYAKSGR…KVKKTAEAGG (85 aa)). Residues cysteine 21 and cysteine 24 each coordinate Zn(2+). Phosphoserine is present on serine 41. Zn(2+)-binding residues include histidine 53 and cysteine 56. N6-acetyllysine is present on residues lysine 97 and lysine 105. The PARP-type 2 zinc finger occupies 113 to 203 (FAAEYAKSNR…ALKKQLPGVK (91 aa)). 2 residues coordinate Zn(2+): cysteine 125 and cysteine 128. Lysine 131 bears the N6-acetyllysine mark. The Zn(2+) site is built by histidine 159 and cysteine 162. 3 positions are modified to phosphoserine: serine 177, serine 179, and serine 185. A Glycyl lysine isopeptide (Lys-Gly) (interchain with G-Cter in SUMO2) cross-link involves residue lysine 192. The disordered stretch occupies residues 198 to 233 (QLPGVKSEGKRKGDEVDGVDEVAKKKSKKEKDKDSK). Lysine 203 participates in a covalent cross-link: Glycyl lysine isopeptide (Lys-Gly) (interchain with G-Cter in SUMO1); alternate. Lysine 203 participates in a covalent cross-link: Glycyl lysine isopeptide (Lys-Gly) (interchain with G-Cter in SUMO2); alternate. Basic and acidic residues predominate over residues 204–233 (SEGKRKGDEVDGVDEVAKKKSKKEKDKDSK). 2 short sequence motifs (nuclear localization signal) span residues 207–209 (KRK) and 221–226 (KKKSKK). One can recognise a PADR1 zinc-binding domain in the interval 225 to 359 (KKEKDKDSKL…VKKQDRIFPP (135 aa)). Lysine 249 is covalently cross-linked (Glycyl lysine isopeptide (Lys-Gly) (interchain with G-Cter in SUMO2)). Residues serine 274 and serine 277 each carry the phosphoserine modification. A zinc ribbon region spans residues 290–332 (GALLPCEECSGQLVFKSDAYYCTGDVTAWTKCMVKTQTPNRKE). Zn(2+)-binding residues include cysteine 295, cysteine 298, cysteine 311, and cysteine 321. The segment at 361-385 (TSASVAATPPPSTASAPAAVNSSAS) is disordered. Serine 364 carries the post-translational modification Phosphoserine. A Phosphothreonine modification is found at threonine 368. Residues 373 to 524 (TASAPAAVNS…GINKSEKRMK (152 aa)) are automodification domain. Positions 385–476 (SADKPLSNMK…KSLQELFLAH (92 aa)) constitute a BRCT domain. PolyADP-ribosyl aspartic acid is present on aspartate 387. Glutamate 407, glutamate 413, glutamate 435, glutamate 437, glutamate 444, glutamate 445, glutamate 448, and glutamate 456 each carry polyADP-ribosyl glutamic acid. Lysine 467 participates in a covalent cross-link: Glycyl lysine isopeptide (Lys-Gly) (interchain with G-Cter in SUMO2). Glutamate 471 and glutamate 484 each carry polyADP-ribosyl glutamic acid. A Glycyl lysine isopeptide (Lys-Gly) (interchain with G-Cter in SUMO1); alternate cross-link involves residue lysine 486. Lysine 486 participates in a covalent cross-link: Glycyl lysine isopeptide (Lys-Gly) (interchain with G-Cter in SUMO2); alternate. PolyADP-ribosyl glutamic acid is present on residues glutamate 488 and glutamate 491. 3 positions are modified to ADP-ribosylserine: serine 499, serine 504, and serine 507. A Glycyl lysine isopeptide (Lys-Gly) (interchain with G-Cter in SUMO2) cross-link involves residue lysine 512. Residues glutamate 513 and glutamate 514 each carry the polyADP-ribosyl glutamic acid modification. Serine 519 is modified (ADP-ribosylserine). Glutamate 520 carries the post-translational modification PolyADP-ribosyl glutamic acid. An N6-(ADP-ribosyl)lysine modification is found at lysine 521. Lysine 528 participates in a covalent cross-link: Glycyl lysine isopeptide (Lys-Gly) (interchain with G-Cter in SUMO2). The WGR domain maps to 542–638 (SAHVLEKGGK…KNFTKYPKKF (97 aa)). Phosphothreonine; by PRKDC is present on threonine 594. N6-acetyllysine is present on residues lysine 600 and lysine 621. A PARP alpha-helical domain is found at 662-779 (KSKLPKPVQD…DIEVAYSLLR (118 aa)). Lysine 748 participates in a covalent cross-link: Glycyl lysine isopeptide (Lys-Gly) (interchain with G-Cter in SUMO1); alternate. Residue lysine 748 forms a Glycyl lysine isopeptide (Lys-Gly) (interchain with G-Cter in SUMO2); alternate linkage. Residues serine 782 and serine 786 each carry the phosphoserine modification. The PARP catalytic domain occupies 788–1014 (DPIDVNYEKL…LKFNFKTSLW (227 aa)). NAD(+) contacts are provided by residues 862-864 (HGS), glycine 871, arginine 878, and serine 904. Residue glutamate 988 is the For poly [ADP-ribose] polymerase activity of the active site.

The protein belongs to the ARTD/PARP family. In terms of assembly, homodimer; PARP-type zinc-fingers from separate PARP1 molecules form a dimer module that specifically recognizes DNA strand breaks. Heterodimer; heterodimerizes with PARP2. Interacts (via the PARP catalytic domain) with HPF1. Interacts with NMNAT1. Interacts with nucleosomes; with a preference for nucleosomes containing H2A.X. Interacts with APTX. Component of a base excision repair (BER) complex, containing at least XRCC1, PARP1, PARP2, POLB and LRIG3. Interacts with SRY. The SWAP complex consists of NPM1, NCL, PARP1 and SWAP70. Interacts with TIAM2. Interacts with PARP3; leading to activate PARP1 in absence of DNA. Interacts (when poly-ADP-ribosylated) with CHD1L (via macro domain). Interacts with the DNA polymerase alpha catalytic subunit POLA1; this interaction functions as part of the control of replication fork progression. Interacts with EEF1A1 and TXK. Interacts with RNF4. Interacts with RNF146. Interacts with ZNF423. Interacts with APLF. Interacts with SNAI1 (via zinc fingers); the interaction requires SNAI1 to be poly-ADP-ribosylated and non-phosphorylated (active) by GSK3B. Interacts (when poly-ADP-ribosylated) with PARP9. Interacts with NR4A3; activates PARP1 by improving acetylation of PARP1 and suppressing the interaction between PARP1 and SIRT1. Interacts (via catalytic domain) with PUM3; the interaction inhibits the poly-ADP-ribosylation activity of PARP1 and the degradation of PARP1 by CASP3 following genotoxic stress. Interacts with ZNF365. Interacts with RRP1B. Interacts with TIMELESS; the interaction is direct. Interacts with CGAS; leading to impede the formation of the PARP1-TIMELESS complex. Interacts with KHDC3L, the interaction is increased following the formation of DNA double-strand breaks. Interacts (when auto-poly-ADP-ribosylated) with XRCC1; leading to inhibit PARP1 ADP-ribosyltransferase activity. Interacts with SPINDOC; promoting PARP1 ADP-ribosyltransferase activity. Interacts with BANF1; leading to inhibit PARP1 ADP-ribosyltransferase activity in response to oxidative DNA damage. Interacts (when sumoylated and ubiquitinated) with VCP/p97; leading to its extraction from chromatin. Interacts with YARS1; Interacts with PACMP micropeptide; interaction. Interacts with PACMP micropeptide; Interacts with PACMP micropeptide; interaction. Interacts (when poly-ADP-ribosylated) with isoform 1 of MACROH2A1; MACROH2A1 specifically binds to poly-ADP-ribose chains and inhibits PARP1 activity, limiting the consumption of nuclear NAD(+). Interacts with CARM1; promoting recruitment to replication forks. Interacts with RECQL. Interacts with ZNF32; the interaction reshapes ZNF432 interacting proteins. Interacts with TPRN; TPRN interacts with a number of DNA damage response proteins, is recruited to sites of DNA damage and may play a role in DNA damage repair. Interacts (when auto-poly-ADP-ribosylated) with AIFM1. As to quaternary structure, (Microbial infection) Interacts with human herpesvirus 8 (KSHV) protein RTA/ORF50; this interaction negatively regulates RTA/ORF50 transactivation activity. Post-translationally, poly-ADP-ribosylated on serine, glutamate and aspartate residues by autocatalysis. Auto-ADP-ribosylation on serine takes place following interaction with HPF1. Auto poly-ADP-ribosylation on serine residues promotes its dissociation from chromatin. Poly-ADP-ribosylated by PARP2; poly-ADP-ribosylation mediates the recruitment of CHD1L to DNA damage sites. Mono-ADP-ribosylated at Lys-521 by SIRT6 in response to oxidative stress, promoting recruitment to double-strand breaks (DSBs) sites. Phosphorylated at Thr-594 by PRKDC in response to DNA damage following virus infection, promoting its translocation to the cytosol. Phosphorylated by TXK. In terms of processing, S-nitrosylated, leading to inhibit transcription regulation activity. Post-translationally, proteolytically cleaved by caspase-3 (CASP3) and caspase-7 (CASP7) in response to apoptosis to generate the Poly [ADP-ribose] polymerase 1, processed N-terminus and Poly [ADP-ribose] polymerase 1, processed C-terminus forms. CASP3-mediated cleavage is promoted by the TP53/p53-induced long non-coding RNA SPARCLE, which binds PARP1 in response to genotoxic stress. Sumoylated with SUMO1 or SUMO2 by PIAS4 following prolonged residence (trapping) to chromatin. Sumoylation promotes ubiquitination by RNF4 and removal from chromatin by VCP/p97. In terms of processing, ubiquitinated by RNF4 following sumoylation by PIAS4 in response to prolonged residence (trapping) to chromatin. Ubiquitination promotes removal from chromatin by VCP/p97.

It localises to the chromosome. The protein resides in the nucleus. Its subcellular location is the nucleolus. It is found in the cytoplasm. The protein localises to the cytosol. It carries out the reaction NAD(+) + (ADP-D-ribosyl)n-acceptor = nicotinamide + (ADP-D-ribosyl)n+1-acceptor + H(+).. It catalyses the reaction L-seryl-[protein] + NAD(+) = O-(ADP-D-ribosyl)-L-seryl-[protein] + nicotinamide + H(+). The enzyme catalyses L-aspartyl-[protein] + NAD(+) = 4-O-(ADP-D-ribosyl)-L-aspartyl-[protein] + nicotinamide. The catalysed reaction is L-glutamyl-[protein] + NAD(+) = 5-O-(ADP-D-ribosyl)-L-glutamyl-[protein] + nicotinamide. It carries out the reaction L-tyrosyl-[protein] + NAD(+) = O-(ADP-D-ribosyl)-L-tyrosyl-[protein] + nicotinamide + H(+). It catalyses the reaction L-histidyl-[protein] + NAD(+) = N(tele)-(ADP-D-ribosyl)-L-histidyl-[protein] + nicotinamide + H(+). With respect to regulation, ADP-ribosyltransferase activity is regulated via an allosteric activation mechanism. In absence of activation signal, PARP1 is autoinhibited by the PARP alpha-helical domain (also named HD region), which prevents effective NAD(+)-binding. Activity is highly stimulated by signals, such as DNA strand breaks. Binding to damaged DNA unfolds the PARP alpha-helical domain, relieving autoinhibition. Poly-ADP-ribosyltransferase activity is tightly regulated and PARP1 is removed from damaged chromatin following initial poly-ADP-ribosylation of chromatin to avoid prolonged residence (trapping) that has cytotoxic consequences. A number of factors (VCP/p97) or post-translational modifications (auto-poly-ADP-ribosylation or ubiquitination) promote PARP1 removal from chromatin. ADP-ribosyltransferase activity is inhibited by a number of PARP inhibitors (PARPi) compounds, that are used the treatment of breast or ovarian cancers that have defects in DNA repair by homologous recombination. PARPi molecules can be classified in three categories: type I compounds (EB-47, UKTT15 and BAD) that promote allosteric retention of PARP1 on DNA, type II inhibitors (talazoparib and olaparib) that mediate a non-allosteric inhibition, and type III inhibitors (rucaparib, niraparib, and veliparib) that promote allosteric release from DNA. Trapping to chromatin by PARPi molecules triggers activation of the cGAS-STING pathway. Its function is as follows. Poly-ADP-ribosyltransferase that mediates poly-ADP-ribosylation of proteins and plays a key role in DNA repair. Mediates glutamate, aspartate, serine, histidine or tyrosine ADP-ribosylation of proteins: the ADP-D-ribosyl group of NAD(+) is transferred to the acceptor carboxyl group of target residues and further ADP-ribosyl groups are transferred to the 2'-position of the terminal adenosine moiety, building up a polymer with an average chain length of 20-30 units. Serine ADP-ribosylation of proteins constitutes the primary form of ADP-ribosylation of proteins in response to DNA damage. Specificity for the different amino acids is conferred by interacting factors, such as HPF1 and NMNAT1. Following interaction with HPF1, catalyzes serine ADP-ribosylation of target proteins; HPF1 confers serine specificity by completing the PARP1 active site. Also catalyzes tyrosine ADP-ribosylation of target proteins following interaction with HPF1. Following interaction with NMNAT1, catalyzes glutamate and aspartate ADP-ribosylation of target proteins; NMNAT1 confers glutamate and aspartate specificity. PARP1 initiates the repair of DNA breaks: recognizes and binds DNA breaks within chromatin and recruits HPF1, licensing serine ADP-ribosylation of target proteins, such as histones (H2BS6ADPr and H3S10ADPr), thereby promoting decompaction of chromatin and the recruitment of repair factors leading to the reparation of DNA strand breaks. HPF1 initiates serine ADP-ribosylation but restricts the polymerase activity of PARP1 in order to limit the length of poly-ADP-ribose chains. In addition to base excision repair (BER) pathway, also involved in double-strand breaks (DSBs) repair: together with TIMELESS, accumulates at DNA damage sites and promotes homologous recombination repair by mediating poly-ADP-ribosylation. Mediates the poly-ADP-ribosylation of a number of proteins, including itself, APLF, CHFR, RPA1 and NFAT5. In addition to proteins, also able to ADP-ribosylate DNA: catalyzes ADP-ribosylation of DNA strand break termini containing terminal phosphates and a 2'-OH group in single- and double-stranded DNA, respectively. Required for PARP9 and DTX3L recruitment to DNA damage sites. PARP1-dependent PARP9-DTX3L-mediated ubiquitination promotes the rapid and specific recruitment of 53BP1/TP53BP1, UIMC1/RAP80, and BRCA1 to DNA damage sites. PARP1-mediated DNA repair in neurons plays a role in sleep: senses DNA damage in neurons and promotes sleep, facilitating efficient DNA repair. In addition to DNA repair, also involved in other processes, such as transcription regulation, programmed cell death, membrane repair, adipogenesis and innate immunity. Acts as a repressor of transcription: binds to nucleosomes and modulates chromatin structure in a manner similar to histone H1, thereby altering RNA polymerase II. Acts both as a positive and negative regulator of transcription elongation, depending on the context. Acts as a positive regulator of transcription elongation by mediating poly-ADP-ribosylation of NELFE, preventing RNA-binding activity of NELFE and relieving transcription pausing. Acts as a negative regulator of transcription elongation in response to DNA damage by catalyzing poly-ADP-ribosylation of CCNT1, disrupting the phase separation activity of CCNT1 and subsequent activation of CDK9. Involved in replication fork progression following interaction with CARM1: mediates poly-ADP-ribosylation at replication forks, slowing fork progression. Poly-ADP-ribose chains generated by PARP1 also play a role in poly-ADP-ribose-dependent cell death, a process named parthanatos. Also acts as a negative regulator of the cGAS-STING pathway. Acts by mediating poly-ADP-ribosylation of CGAS: PARP1 translocates into the cytosol following phosphorylation by PRKDC and catalyzes poly-ADP-ribosylation and inactivation of CGAS. Acts as a negative regulator of adipogenesis: catalyzes poly-ADP-ribosylation of histone H2B on 'Glu-35' (H2BE35ADPr) following interaction with NMNAT1, inhibiting phosphorylation of H2B at 'Ser-36' (H2BS36ph), thereby blocking expression of pro-adipogenetic genes. Involved in the synthesis of ATP in the nucleus, together with NMNAT1, PARG and NUDT5. Nuclear ATP generation is required for extensive chromatin remodeling events that are energy-consuming. In terms of biological role, promotes AIFM1-mediated apoptosis. This form, which translocates into the cytoplasm following cleavage by caspase-3 (CASP3) and caspase-7 (CASP7) in response to apoptosis, is auto-poly-ADP-ribosylated and serves as a poly-ADP-ribose carrier to induce AIFM1-mediated apoptosis. This cleavage form irreversibly binds to DNA breaks and interferes with DNA repair, promoting DNA damage-induced apoptosis. The chain is Poly [ADP-ribose] polymerase 1 from Homo sapiens (Human).